The primary structure comprises 395 residues: NKAP-like protein (395 aa).

Disordered stretches follow at residues 1 to 77 (MSPV…RPLP) and 91 to 247 (CGGY…ISCK). A phosphoserine mark is found at S23 and S25. The span at 25-35 (SPPSALQTSRS) shows a compositional bias: polar residues. Over residues 109–130 (DQEKEKEESYRQRRLKERERIG) the composition is skewed to basic and acidic residues. Position 149 is a phosphoserine (S149). Over residues 150-161 (DEHTPAEDEVKN) the composition is skewed to basic and acidic residues. 2 stretches are compositionally biased toward basic residues: residues 177–197 (KTSH…KHKK) and 214–238 (KKVK…KRTK).

Belongs to the NKAP family. As to quaternary structure, interacts with RBPJ, CIR1 and HDAC3. Specific to testis (at protein level). Detected in differenting spermatogonia and early spermatocytes (at protein level).

Its subcellular location is the nucleus. In terms of biological role, transcriptional repressor of Notch-mediated signaling. Required for spermatogenesis. The protein is NKAP-like protein of Mus musculus (Mouse).